The sequence spans 323 residues: Acetyl esterase (323 aa).

The Involved in the stabilization of the negatively charged intermediate by the formation of the oxyanion hole motif lies at 91–93; it reads HGG. Catalysis depends on residues serine 165, aspartate 262, and histidine 292.

Belongs to the 'GDXG' lipolytic enzyme family. In terms of assembly, homodimer. Interacts with MalT and MelA.

The protein localises to the cytoplasm. Displays esterase activity towards short chain fatty esters (acyl chain length of up to 8 carbons). Able to hydrolyze triacetylglycerol (triacetin) and tributyrylglycerol (tributyrin), but not trioleylglycerol (triolein) or cholesterol oleate. Negatively regulates MalT activity by antagonizing maltotriose binding. Inhibits MelA galactosidase activity. In Salmonella choleraesuis (strain SC-B67), this protein is Acetyl esterase.